Reading from the N-terminus, the 449-residue chain is NADH-quinone oxidoreductase subunit D (449 aa).

This sequence belongs to the complex I 49 kDa subunit family. As to quaternary structure, NDH-1 is composed of 14 different subunits. Subunits NuoB, C, D, E, F, and G constitute the peripheral sector of the complex.

It is found in the cell membrane. The enzyme catalyses a quinone + NADH + 5 H(+)(in) = a quinol + NAD(+) + 4 H(+)(out). Functionally, NDH-1 shuttles electrons from NADH, via FMN and iron-sulfur (Fe-S) centers, to quinones in the respiratory chain. The immediate electron acceptor for the enzyme in this species is believed to be a menaquinone. Couples the redox reaction to proton translocation (for every two electrons transferred, four hydrogen ions are translocated across the cytoplasmic membrane), and thus conserves the redox energy in a proton gradient. In Saccharopolyspora erythraea (strain ATCC 11635 / DSM 40517 / JCM 4748 / NBRC 13426 / NCIMB 8594 / NRRL 2338), this protein is NADH-quinone oxidoreductase subunit D.